Reading from the N-terminus, the 249-residue chain is Type III pantothenate kinase (249 aa).

6–13 (DAGNSRIK) provides a ligand contact to ATP. Substrate contacts are provided by residues phenylalanine 77 and 98–101 (GVDR). Catalysis depends on aspartate 100, which acts as the Proton acceptor. Residue aspartate 121 coordinates K(+). An ATP-binding site is contributed by serine 124. Threonine 177 serves as a coordination point for substrate.

Belongs to the type III pantothenate kinase family. In terms of assembly, homodimer. NH4(+) serves as cofactor. It depends on K(+) as a cofactor.

It localises to the cytoplasm. The catalysed reaction is (R)-pantothenate + ATP = (R)-4'-phosphopantothenate + ADP + H(+). The protein operates within cofactor biosynthesis; coenzyme A biosynthesis; CoA from (R)-pantothenate: step 1/5. In terms of biological role, catalyzes the phosphorylation of pantothenate (Pan), the first step in CoA biosynthesis. The polypeptide is Type III pantothenate kinase (Teredinibacter turnerae (strain ATCC 39867 / T7901)).